Reading from the N-terminus, the 205-residue chain is CASP-like protein 3A1 (205 aa).

The Cytoplasmic segment spans residues 1 to 39 (MGIGMDSSTMSGPLVAHSGILDGDYEKRPAVCKMQMRFD). A helical transmembrane segment spans residues 40–60 (LANVGLRVLSLACSLVALVSM). Over 61–89 (ASNQESGVVTVFGFKLPVYSKWSYSDSFE) the chain is Extracellular. The helical transmembrane segment at 90–110 (FLVGASAAAAAHSLLQLLLCG) threads the bilayer. Residues 111-125 (MKMVKRASTIPSRNH) are Cytoplasmic-facing. A helical membrane pass occupies residues 126-146 (AWLLFAGDQVFAYGMLAAASA). At 147 to 176 (AAGVTNLNRTGFRHSDLPNFCKPLHRFCDK) the chain is on the extracellular side. N154 carries an N-linked (GlcNAc...) asparagine glycan. The chain crosses the membrane as a helical span at residues 177 to 197 (AAISIVFAFISSLILGGSAVL). The Cytoplasmic segment spans residues 198–205 (DVFWLSKN).

Belongs to the Casparian strip membrane proteins (CASP) family. In terms of assembly, homodimer and heterodimers.

It localises to the cell membrane. The chain is CASP-like protein 3A1 from Picea sitchensis (Sitka spruce).